Reading from the N-terminus, the 431-residue chain is Probable 3-hydroxy-3-methylglutaryl-coenzyme A reductase (431 aa).

Residues Glu-85 and Asp-278 each act as charge relay system in the active site. The active-site Proton donor is the His-375.

The protein belongs to the HMG-CoA reductase family.

It catalyses the reaction (R)-mevalonate + 2 NAD(+) + CoA = (3S)-3-hydroxy-3-methylglutaryl-CoA + 2 NADH + 2 H(+). Its pathway is metabolic intermediate metabolism; (R)-mevalonate degradation; (S)-3-hydroxy-3-methylglutaryl-CoA from (R)-mevalonate: step 1/1. In terms of biological role, converts HMG-CoA to mevalonate. The sequence is that of Probable 3-hydroxy-3-methylglutaryl-coenzyme A reductase from Borreliella burgdorferi (strain ATCC 35210 / DSM 4680 / CIP 102532 / B31) (Borrelia burgdorferi).